Reading from the N-terminus, the 696-residue chain is UvrABC system protein B (696 aa).

The Helicase ATP-binding domain maps to 46–433 (EGVEDGLSFQ…SGQTAEQVVR (388 aa)). 59-66 (GVTGSGKT) is a binding site for ATP. A Beta-hairpin motif is present at residues 112–135 (YYDYYQPEAYVPQRDLFIEKDSSI). In terms of domain architecture, Helicase C-terminal spans 450-616 (QVDDVLSEIT…GVVKRIKDII (167 aa)). The UVR domain maps to 647–682 (AKEIKRLEKQMADYAKNLEFEKAAQTRDQLALLRER).

The protein belongs to the UvrB family. As to quaternary structure, forms a heterotetramer with UvrA during the search for lesions. Interacts with UvrC in an incision complex.

The protein resides in the cytoplasm. The UvrABC repair system catalyzes the recognition and processing of DNA lesions. A damage recognition complex composed of 2 UvrA and 2 UvrB subunits scans DNA for abnormalities. Upon binding of the UvrA(2)B(2) complex to a putative damaged site, the DNA wraps around one UvrB monomer. DNA wrap is dependent on ATP binding by UvrB and probably causes local melting of the DNA helix, facilitating insertion of UvrB beta-hairpin between the DNA strands. Then UvrB probes one DNA strand for the presence of a lesion. If a lesion is found the UvrA subunits dissociate and the UvrB-DNA preincision complex is formed. This complex is subsequently bound by UvrC and the second UvrB is released. If no lesion is found, the DNA wraps around the other UvrB subunit that will check the other stand for damage. The sequence is that of UvrABC system protein B from Burkholderia mallei (strain ATCC 23344).